The following is a 426-amino-acid chain: Glutamate-1-semialdehyde 2,1-aminomutase (426 aa).

Lys265 is modified (N6-(pyridoxal phosphate)lysine).

It belongs to the class-III pyridoxal-phosphate-dependent aminotransferase family. HemL subfamily. Pyridoxal 5'-phosphate serves as cofactor.

The protein resides in the cytoplasm. The enzyme catalyses (S)-4-amino-5-oxopentanoate = 5-aminolevulinate. It functions in the pathway porphyrin-containing compound metabolism; protoporphyrin-IX biosynthesis; 5-aminolevulinate from L-glutamyl-tRNA(Glu): step 2/2. The chain is Glutamate-1-semialdehyde 2,1-aminomutase from Hyperthermus butylicus (strain DSM 5456 / JCM 9403 / PLM1-5).